The chain runs to 333 residues: tRNA N6-adenosine threonylcarbamoyltransferase (333 aa).

Fe cation contacts are provided by histidine 111 and histidine 115. Residues 134–138, aspartate 167, glycine 180, and asparagine 272 each bind substrate; that span reads LVSGG. Fe cation is bound at residue aspartate 300.

The protein belongs to the KAE1 / TsaD family. Fe(2+) serves as cofactor.

The protein resides in the cytoplasm. It carries out the reaction L-threonylcarbamoyladenylate + adenosine(37) in tRNA = N(6)-L-threonylcarbamoyladenosine(37) in tRNA + AMP + H(+). In terms of biological role, required for the formation of a threonylcarbamoyl group on adenosine at position 37 (t(6)A37) in tRNAs that read codons beginning with adenine. Is involved in the transfer of the threonylcarbamoyl moiety of threonylcarbamoyl-AMP (TC-AMP) to the N6 group of A37, together with TsaE and TsaB. TsaD likely plays a direct catalytic role in this reaction. This Legionella pneumophila (strain Lens) protein is tRNA N6-adenosine threonylcarbamoyltransferase.